A 151-amino-acid polypeptide reads, in one-letter code: Regulatory protein RecX (151 aa).

The protein belongs to the RecX family.

The protein resides in the cytoplasm. Its function is as follows. Modulates RecA activity. In Herminiimonas arsenicoxydans, this protein is Regulatory protein RecX.